A 184-amino-acid polypeptide reads, in one-letter code: Elongation factor P (184 aa).

The protein belongs to the elongation factor P family.

The protein resides in the cytoplasm. It functions in the pathway protein biosynthesis; polypeptide chain elongation. In terms of biological role, involved in peptide bond synthesis. Stimulates efficient translation and peptide-bond synthesis on native or reconstituted 70S ribosomes in vitro. Probably functions indirectly by altering the affinity of the ribosome for aminoacyl-tRNA, thus increasing their reactivity as acceptors for peptidyl transferase. The polypeptide is Elongation factor P (Thermus thermophilus (strain ATCC BAA-163 / DSM 7039 / HB27)).